A 297-amino-acid polypeptide reads, in one-letter code: Nucleotide-binding protein BURPS668_0577 (297 aa).

8–15 (GISGSGKS) lines the ATP pocket. Residue 57-60 (DARS) participates in GTP binding.

Belongs to the RapZ-like family.

Displays ATPase and GTPase activities. The polypeptide is Nucleotide-binding protein BURPS668_0577 (Burkholderia pseudomallei (strain 668)).